The sequence spans 91 residues: Small ribosomal subunit protein bS20 (91 aa).

Positions 1-23 (MANTSSAKKATRKIARRTEVNKA) are disordered.

Belongs to the bacterial ribosomal protein bS20 family.

Binds directly to 16S ribosomal RNA. This Rhizobium rhizogenes (strain K84 / ATCC BAA-868) (Agrobacterium radiobacter) protein is Small ribosomal subunit protein bS20.